A 285-amino-acid polypeptide reads, in one-letter code: Lipoyl synthase (285 aa).

Positions 36, 41, 47, 62, 66, 69, and 275 each coordinate [4Fe-4S] cluster. In terms of domain architecture, Radical SAM core spans 48-264 (FSKKTATFLI…KEYAISIGFK (217 aa)).

The protein belongs to the radical SAM superfamily. Lipoyl synthase family. The cofactor is [4Fe-4S] cluster.

It is found in the cytoplasm. It catalyses the reaction [[Fe-S] cluster scaffold protein carrying a second [4Fe-4S](2+) cluster] + N(6)-octanoyl-L-lysyl-[protein] + 2 oxidized [2Fe-2S]-[ferredoxin] + 2 S-adenosyl-L-methionine + 4 H(+) = [[Fe-S] cluster scaffold protein] + N(6)-[(R)-dihydrolipoyl]-L-lysyl-[protein] + 4 Fe(3+) + 2 hydrogen sulfide + 2 5'-deoxyadenosine + 2 L-methionine + 2 reduced [2Fe-2S]-[ferredoxin]. It participates in protein modification; protein lipoylation via endogenous pathway; protein N(6)-(lipoyl)lysine from octanoyl-[acyl-carrier-protein]: step 2/2. Its function is as follows. Catalyzes the radical-mediated insertion of two sulfur atoms into the C-6 and C-8 positions of the octanoyl moiety bound to the lipoyl domains of lipoate-dependent enzymes, thereby converting the octanoylated domains into lipoylated derivatives. In Caldicellulosiruptor saccharolyticus (strain ATCC 43494 / DSM 8903 / Tp8T 6331), this protein is Lipoyl synthase.